We begin with the raw amino-acid sequence, 520 residues long: Ribonuclease Y (520 aa).

The chain crosses the membrane as a helical span at residues 5–25 (ITIISSLLFLIVGLVVGSLIF). The segment at 70–127 (RTEIENELRGRRTETQKAENRLLQREENLDRKDTSLSKREATLERKEESISKRQQQIE) is disordered. Residues 210–273 (TVSVVTLPND…EIARIALEKL (64 aa)) enclose the KH domain. The 94-residue stretch at 336–429 (VLNHSLEVSK…VAAADALSAA (94 aa)) folds into the HD domain.

It belongs to the RNase Y family.

It is found in the cell membrane. Functionally, endoribonuclease that initiates mRNA decay. The chain is Ribonuclease Y from Listeria welshimeri serovar 6b (strain ATCC 35897 / DSM 20650 / CCUG 15529 / CIP 8149 / NCTC 11857 / SLCC 5334 / V8).